Here is a 482-residue protein sequence, read N- to C-terminus: O-phosphoseryl-tRNA(Sec) selenium transferase (482 aa).

Residues Met-1–Glu-36 form a tetramerization region. Arg-69 serves as a coordination point for pyridoxal 5'-phosphate. The tract at residues Gly-90–Pro-100 is phosphate loop (P-loop). Substrate is bound by residues Arg-91, Ser-92, and Gln-99. Lys-277 carries the post-translational modification N6-(pyridoxal phosphate)lysine. A substrate-binding site is contributed by Arg-306. Position 388 (Arg-388) interacts with tRNA. The disordered stretch occupies residues Asp-461–Asp-482.

This sequence belongs to the SepSecS family. Homotetramer formed by a catalytic dimer and a non-catalytic dimer serving as a binding platform that orients tRNASec for catalysis. Each tetramer binds the CCA ends of two tRNAs which point to the active sites of the catalytic dimer. The cofactor is pyridoxal 5'-phosphate.

The protein resides in the cytoplasm. It carries out the reaction O-phospho-L-seryl-tRNA(Sec) + selenophosphate + H2O = L-selenocysteinyl-tRNA(Sec) + 2 phosphate. The protein operates within aminoacyl-tRNA biosynthesis; selenocysteinyl-tRNA(Sec) biosynthesis; selenocysteinyl-tRNA(Sec) from L-seryl-tRNA(Sec) (archaeal/eukaryal route): step 2/2. Its function is as follows. Converts O-phosphoseryl-tRNA(Sec) to selenocysteinyl-tRNA(Sec) required for selenoprotein biosynthesis. The polypeptide is O-phosphoseryl-tRNA(Sec) selenium transferase (secs-1) (Caenorhabditis briggsae).